A 334-amino-acid chain; its full sequence is GTP 3',8-cyclase (334 aa).

One can recognise a Radical SAM core domain in the interval 11 to 236 (GFNRKIDYLR…ESTESSQGPA (226 aa)). Residue R20 participates in GTP binding. [4Fe-4S] cluster contacts are provided by C27 and C31. S-adenosyl-L-methionine is bound at residue Y33. Position 34 (C34) interacts with [4Fe-4S] cluster. R69 lines the GTP pocket. G73 contributes to the S-adenosyl-L-methionine binding site. T100 is a GTP binding site. Position 124 (S124) interacts with S-adenosyl-L-methionine. K161 serves as a coordination point for GTP. S-adenosyl-L-methionine is bound at residue M195. [4Fe-4S] cluster contacts are provided by C260 and C263. 265–267 (RVR) contacts GTP. C277 provides a ligand contact to [4Fe-4S] cluster.

Belongs to the radical SAM superfamily. MoaA family. As to quaternary structure, monomer and homodimer. [4Fe-4S] cluster is required as a cofactor.

The enzyme catalyses GTP + AH2 + S-adenosyl-L-methionine = (8S)-3',8-cyclo-7,8-dihydroguanosine 5'-triphosphate + 5'-deoxyadenosine + L-methionine + A + H(+). It functions in the pathway cofactor biosynthesis; molybdopterin biosynthesis. In terms of biological role, catalyzes the cyclization of GTP to (8S)-3',8-cyclo-7,8-dihydroguanosine 5'-triphosphate. The sequence is that of GTP 3',8-cyclase from Pseudomonas putida (strain W619).